We begin with the raw amino-acid sequence, 57 residues long: DELTA-limacoditoxin(2)-Dv11 (57 aa).

The signal sequence occupies residues 1-24; the sequence is MKFAKTFLLLFVVLLLLSIVMAEP.

It belongs to the limacoditoxin-2 (cecropin-like) family. In terms of tissue distribution, expressed by the venom secretory cell of the spine. The spine is a cuticular structure containing a single large nucleated venom-secreting cell at its base. It is an independent unit capable of producing, storing and injecting venom. On the back of D.vulnerans caterpillars, spines are grouped together by 50 to 100 to form scoli, of which there are eight in D.vulnerans.

The protein resides in the secreted. Peptide that induces pain in mammals and has insecticidal, antibacterial and antiparasitic activities. Induces partially reversible paralysis in D.melanogaster when tested at high doses. Shows a moderate antiparasitic activity against the major pathogenic nematode of ruminants (H.contortus, EC(50)=30.5 uM). Has potent or moderate antibacterial activities against A.baumannii (MIC&lt;0.25 ug/mL) and S.aureus (MIC=16 ug/mL). Has no activity on the other bacteria tested, nor on the fungus C.albicans. Strongly induces the increase of intracellular calcium in mice DRG neurons, which is a proxy for neuronal activation that would occur during nociception. This increase is due to influx of extracellular calcium, suggesting that the peptide forms pore or channel in neuronal cell membranes. In addition, intraplantar injection in mice provokes nocifensive behavior, suggesting a pain-inducing activity. The chain is DELTA-limacoditoxin(2)-Dv11 from Doratifera vulnerans (Mottled cup moth).